A 251-amino-acid polypeptide reads, in one-letter code: Cytochrome c oxidase subunit 2 (251 aa).

2 consecutive transmembrane segments (helical) span residues 42–62 (NIMFYLFIILGLVSWMLFTIV) and 83–103 (IIWTMFPAVILLIIAFPSFIL). Cu cation is bound by residues H186, C221, E223, C225, H229, and M232. E223 lines the Mg(2+) pocket.

Belongs to the cytochrome c oxidase subunit 2 family. In terms of assembly, component of the cytochrome c oxidase (complex IV, CIV), a multisubunit enzyme composed of a catalytic core of 3 subunits and several supernumerary subunits. The complex exists as a monomer or a dimer and forms supercomplexes (SCs) in the inner mitochondrial membrane with ubiquinol-cytochrome c oxidoreductase (cytochrome b-c1 complex, complex III, CIII). Requires Cu cation as cofactor.

It is found in the mitochondrion inner membrane. The enzyme catalyses 4 Fe(II)-[cytochrome c] + O2 + 8 H(+)(in) = 4 Fe(III)-[cytochrome c] + 2 H2O + 4 H(+)(out). Component of the cytochrome c oxidase, the last enzyme in the mitochondrial electron transport chain which drives oxidative phosphorylation. The respiratory chain contains 3 multisubunit complexes succinate dehydrogenase (complex II, CII), ubiquinol-cytochrome c oxidoreductase (cytochrome b-c1 complex, complex III, CIII) and cytochrome c oxidase (complex IV, CIV), that cooperate to transfer electrons derived from NADH and succinate to molecular oxygen, creating an electrochemical gradient over the inner membrane that drives transmembrane transport and the ATP synthase. Cytochrome c oxidase is the component of the respiratory chain that catalyzes the reduction of oxygen to water. Electrons originating from reduced cytochrome c in the intermembrane space (IMS) are transferred via the dinuclear copper A center (CU(A)) of subunit 2 and heme A of subunit 1 to the active site in subunit 1, a binuclear center (BNC) formed by heme A3 and copper B (CU(B)). The BNC reduces molecular oxygen to 2 water molecules using 4 electrons from cytochrome c in the IMS and 4 protons from the mitochondrial matrix. The protein is Cytochrome c oxidase subunit 2 (COX2) of Candida glabrata (strain ATCC 2001 / BCRC 20586 / JCM 3761 / NBRC 0622 / NRRL Y-65 / CBS 138) (Yeast).